A 239-amino-acid chain; its full sequence is tRNA1(Val) (adenine(37)-N6)-methyltransferase (239 aa).

This sequence belongs to the methyltransferase superfamily. tRNA (adenine-N(6)-)-methyltransferase family.

The protein resides in the cytoplasm. It carries out the reaction adenosine(37) in tRNA1(Val) + S-adenosyl-L-methionine = N(6)-methyladenosine(37) in tRNA1(Val) + S-adenosyl-L-homocysteine + H(+). In terms of biological role, specifically methylates the adenine in position 37 of tRNA(1)(Val) (anticodon cmo5UAC). The chain is tRNA1(Val) (adenine(37)-N6)-methyltransferase from Trichodesmium erythraeum (strain IMS101).